The sequence spans 372 residues: Chloromuconate cycloisomerase (372 aa).

Catalysis depends on Lys-158, which acts as the Proton acceptor. Residues Asp-187, Glu-213, and Asp-238 each contribute to the Mn(2+) site. The active-site Proton donor is the Glu-316.

This sequence belongs to the mandelate racemase/muconate lactonizing enzyme family. Mn(2+) serves as cofactor.

The enzyme catalyses 2-[(2R)-2-chloro-2,5-dihydro-5-oxofuryl]acetate = 3-chloro-cis,cis-muconate + H(+). Its pathway is aromatic compound metabolism; 3-chlorocatechol degradation. This Cupriavidus pinatubonensis (strain JMP 134 / LMG 1197) (Cupriavidus necator (strain JMP 134)) protein is Chloromuconate cycloisomerase (tfdDII).